Reading from the N-terminus, the 271-residue chain is HTH-type transcriptional repressor AllR (271 aa).

The HTH iclR-type domain occupies 21–83 (AQALERGIAI…SQLGWWHIGL (63 aa)). The H-T-H motif DNA-binding region spans 43 to 62 (VSDISLNLDLPLSTTFRLLK). Residues 98 to 267 (VLSVAGPFMR…ARDISTALGL (170 aa)) form the IclR-ED domain. Glyoxylate is bound by residues 154–156 (SGA), aspartate 207, cysteine 217, and 234–236 (SIS).

In terms of biological role, negative regulator of allantoin and glyoxylate utilization operons. Binds to the gcl promoter and to the allS-allA intergenic region. The chain is HTH-type transcriptional repressor AllR (allR) from Escherichia coli O6:H1 (strain CFT073 / ATCC 700928 / UPEC).